The chain runs to 325 residues: tRNA pseudouridine synthase B (325 aa).

Aspartate 49 functions as the Nucleophile in the catalytic mechanism.

It belongs to the pseudouridine synthase TruB family. Type 1 subfamily.

It catalyses the reaction uridine(55) in tRNA = pseudouridine(55) in tRNA. Responsible for synthesis of pseudouridine from uracil-55 in the psi GC loop of transfer RNAs. The protein is tRNA pseudouridine synthase B of Mesorhizobium japonicum (strain LMG 29417 / CECT 9101 / MAFF 303099) (Mesorhizobium loti (strain MAFF 303099)).